Here is a 101-residue protein sequence, read N- to C-terminus: Large ribosomal subunit protein uL24 (101 aa).

This sequence belongs to the universal ribosomal protein uL24 family. As to quaternary structure, part of the 50S ribosomal subunit.

Functionally, one of two assembly initiator proteins, it binds directly to the 5'-end of the 23S rRNA, where it nucleates assembly of the 50S subunit. One of the proteins that surrounds the polypeptide exit tunnel on the outside of the subunit. This chain is Large ribosomal subunit protein uL24, found in Streptococcus uberis (strain ATCC BAA-854 / 0140J).